The following is a 430-amino-acid chain: Enolase (430 aa).

Q163 is a binding site for (2R)-2-phosphoglycerate. Residue E205 is the Proton donor of the active site. Positions 242, 287, and 314 each coordinate Mg(2+). 4 residues coordinate (2R)-2-phosphoglycerate: K339, R368, S369, and K390. K339 acts as the Proton acceptor in catalysis.

The protein belongs to the enolase family. Requires Mg(2+) as cofactor.

It is found in the cytoplasm. The protein localises to the secreted. It localises to the cell surface. The catalysed reaction is (2R)-2-phosphoglycerate = phosphoenolpyruvate + H2O. Its pathway is carbohydrate degradation; glycolysis; pyruvate from D-glyceraldehyde 3-phosphate: step 4/5. Its function is as follows. Catalyzes the reversible conversion of 2-phosphoglycerate (2-PG) into phosphoenolpyruvate (PEP). It is essential for the degradation of carbohydrates via glycolysis. This is Enolase from Bacillus pumilus (strain SAFR-032).